The sequence spans 356 residues: Protein MGF 360-10L (356 aa).

One copy of the ANK repeat lies at 57–89 (DLNTALMLATKENNYQLIKMFTDWGADINYGLI). Asparagine 172 is a glycosylation site (N-linked (GlcNAc...) asparagine; by host). Residues 249-271 (NFLTIYYCFILGANINLAMIASI) form a helical membrane-spanning segment. N-linked (GlcNAc...) asparagine; by host glycosylation is found at asparagine 352 and asparagine 353.

This sequence belongs to the asfivirus MGF 360 family.

Its subcellular location is the host membrane. Functionally, plays a role in virus cell tropism, and may be required for efficient virus replication in macrophages. The polypeptide is Protein MGF 360-10L (African swine fever virus (isolate Tick/South Africa/Pretoriuskop Pr4/1996) (ASFV)).